A 355-amino-acid polypeptide reads, in one-letter code: Protein RecA (355 aa).

78–85 (GPESSGKT) is a binding site for ATP.

It belongs to the RecA family.

It is found in the cytoplasm. Functionally, can catalyze the hydrolysis of ATP in the presence of single-stranded DNA, the ATP-dependent uptake of single-stranded DNA by duplex DNA, and the ATP-dependent hybridization of homologous single-stranded DNAs. It interacts with LexA causing its activation and leading to its autocatalytic cleavage. This is Protein RecA from Rhodobacter capsulatus (Rhodopseudomonas capsulata).